Here is a 286-residue protein sequence, read N- to C-terminus: NH(3)-dependent NAD(+) synthetase (286 aa).

51-58 serves as a coordination point for ATP; sequence GISGGVDS. Residue D57 participates in Mg(2+) binding. Deamido-NAD(+) is bound at residue R148. T168 contacts ATP. E173 is a Mg(2+) binding site. Deamido-NAD(+)-binding residues include K181 and D188. ATP-binding residues include K197 and T219. A deamido-NAD(+)-binding site is contributed by 268–269; the sequence is HK.

Belongs to the NAD synthetase family. In terms of assembly, homodimer.

The enzyme catalyses deamido-NAD(+) + NH4(+) + ATP = AMP + diphosphate + NAD(+) + H(+). The protein operates within cofactor biosynthesis; NAD(+) biosynthesis; NAD(+) from deamido-NAD(+) (ammonia route): step 1/1. In terms of biological role, catalyzes the ATP-dependent amidation of deamido-NAD to form NAD. Uses ammonia as a nitrogen source. This Paraburkholderia phytofirmans (strain DSM 17436 / LMG 22146 / PsJN) (Burkholderia phytofirmans) protein is NH(3)-dependent NAD(+) synthetase.